The sequence spans 258 residues: Protein UL24 homolog (258 aa).

Belongs to the herpesviridae UL24 family.

It localises to the virion. It is found in the host cytoplasm. The protein resides in the host nucleus. The protein localises to the host nucleolus. Its subcellular location is the host Golgi apparatus. May participate in nuclear egress of viral particles. Plays a role in the dispersal of several host nucleolar proteins including NCL/nucleolin and NPM1. Since deletion of host NCL/nucleolin negatively impact on nuclear egress, UL24 supposedly acts on this process through its effect on host nucleoli. This chain is Protein UL24 homolog, found in Varicella-zoster virus (strain Dumas) (HHV-3).